A 271-amino-acid polypeptide reads, in one-letter code: L-aspartate dehydrogenase (271 aa).

The NAD(+) site is built by alanine 124 and asparagine 192. Histidine 222 is an active-site residue.

The protein belongs to the L-aspartate dehydrogenase family.

The catalysed reaction is L-aspartate + NADP(+) + H2O = oxaloacetate + NH4(+) + NADPH + H(+). The enzyme catalyses L-aspartate + NAD(+) + H2O = oxaloacetate + NH4(+) + NADH + H(+). It participates in cofactor biosynthesis; NAD(+) biosynthesis; iminoaspartate from L-aspartate (dehydrogenase route): step 1/1. Functionally, specifically catalyzes the NAD or NADP-dependent dehydrogenation of L-aspartate to iminoaspartate. The polypeptide is L-aspartate dehydrogenase (Methanosarcina barkeri (strain Fusaro / DSM 804)).